The chain runs to 228 residues: uncharacterized protein (228 aa).

5 consecutive transmembrane segments (helical) span residues 14-34 (HTIS…MLLV), 42-62 (VALF…AITL), 130-150 (FIFS…LVGS), 156-176 (FSFD…VLFM), and 192-212 (IVIA…LIAL).

The protein belongs to the AzlC family.

Its subcellular location is the cell membrane. This is an uncharacterized protein from Helicobacter pylori (strain ATCC 700392 / 26695) (Campylobacter pylori).